The primary structure comprises 324 residues: NADH-ubiquinone oxidoreductase chain 1 (324 aa).

8 helical membrane passes run 9-29 (LINPLAYIVPVLLAVAFLTLI), 75-95 (FLFLAAPVLALTLAMTLWAPM), 106-126 (LGILFILALSSLAVYSILGSG), 146-166 (ISYEVSLGLILLSVIIFSGGY), 177-197 (SIWLLIPAWPLAAMWYISTLA), 228-248 (LFFLAEYANILLMNTLSAVLF), 259-279 (ELTTINLMTKAALLSIMFLWV), and 299-319 (FLPLTLAFVLWHTALPIALAG).

Belongs to the complex I subunit 1 family.

It is found in the mitochondrion inner membrane. The enzyme catalyses a ubiquinone + NADH + 5 H(+)(in) = a ubiquinol + NAD(+) + 4 H(+)(out). Core subunit of the mitochondrial membrane respiratory chain NADH dehydrogenase (Complex I) that is believed to belong to the minimal assembly required for catalysis. Complex I functions in the transfer of electrons from NADH to the respiratory chain. The immediate electron acceptor for the enzyme is believed to be ubiquinone. In Cyprinus carpio (Common carp), this protein is NADH-ubiquinone oxidoreductase chain 1 (MT-ND1).